A 138-amino-acid polypeptide reads, in one-letter code: Diuretic hormone 1 (138 aa).

Positions 1–19 (MMWWAIWCVMVVVSSAASA) are cleaved as a signal peptide. Positions 20 to 78 (APAPDSAPMDLVQIDSAGPDDESLGYAVSSLEGRYGAEAPWLYLLAEMPRDSQIGRAAV) are excised as a propeptide. At isoleucine 121 the chain carries Isoleucine amide. Positions 125–138 (GLQWSRSEQPSAYY) are excised as a propeptide.

Belongs to the sauvagine/corticotropin-releasing factor/urotensin I family.

It is found in the secreted. Regulation of fluid secretion. The polypeptide is Diuretic hormone 1 (Manduca sexta (Tobacco hawkmoth)).